Here is a 125-residue protein sequence, read N- to C-terminus: Cyclic diguanosine monophosphate-binding protein PA4608 (125 aa).

Aspartate 6 to arginine 13 lines the 3',3'-c-di-GMP pocket. The PilZ domain maps to glutamate 7–glutamate 103. Residues arginine 9–arginine 13 carry the RXXXR motif; surrounds the surface of the c-di-GMP binding site motif. Positions aspartate 35–glycine 40 match the DXSXXG motif; surrounds the surface of the c-di-GMP binding site motif. Position 77 (tryptophan 77) interacts with 3',3'-c-di-GMP.

Monomer in both c-di-GMP-bound and free forms.

In terms of biological role, binds the second messenger bis-(3'-5') cyclic dimeric guanosine monophosphate (c-di-GMP). Can bind two c-di-GMP molecules per monomer. May play a role in bacterial second-messenger regulated processes. Binding to c-di-GMP induces a conformational change of the C- and N-termini resulting in the exposure of a highly negative surface on one side of the protein to a possible effector protein. The sequence is that of Cyclic diguanosine monophosphate-binding protein PA4608 from Pseudomonas aeruginosa (strain ATCC 15692 / DSM 22644 / CIP 104116 / JCM 14847 / LMG 12228 / 1C / PRS 101 / PAO1).